Reading from the N-terminus, the 284-residue chain is Bifunctional protein FolD (284 aa).

Residues 165–167 (GAS), S190, and I231 each bind NADP(+).

It belongs to the tetrahydrofolate dehydrogenase/cyclohydrolase family. As to quaternary structure, homodimer.

It catalyses the reaction (6R)-5,10-methylene-5,6,7,8-tetrahydrofolate + NADP(+) = (6R)-5,10-methenyltetrahydrofolate + NADPH. The catalysed reaction is (6R)-5,10-methenyltetrahydrofolate + H2O = (6R)-10-formyltetrahydrofolate + H(+). The protein operates within one-carbon metabolism; tetrahydrofolate interconversion. In terms of biological role, catalyzes the oxidation of 5,10-methylenetetrahydrofolate to 5,10-methenyltetrahydrofolate and then the hydrolysis of 5,10-methenyltetrahydrofolate to 10-formyltetrahydrofolate. This is Bifunctional protein FolD from Bordetella avium (strain 197N).